The chain runs to 300 residues: Very-long-chain enoyl-CoA reductase (300 aa).

A helical membrane pass occupies residues 91–111; the sequence is SLVFICEYAGPLFVYPIFYFL. Residue N163 is glycosylated (N-linked (GlcNAc...) asparagine). Residues 191-211 form a helical membrane-spanning segment; it reads VYLGLGLWIIGEVFNYICHIQ. Residue N238 is glycosylated (N-linked (GlcNAc...) asparagine). The helical transmembrane segment at 243-263 threads the bilayer; that stretch reads ILSWIGFSILTQTLTSWIFAL.

This sequence belongs to the steroid 5-alpha reductase family.

Its subcellular location is the endoplasmic reticulum membrane. It catalyses the reaction a very-long-chain 2,3-saturated fatty acyl-CoA + NADP(+) = a very-long-chain (2E)-enoyl-CoA + NADPH + H(+). Its pathway is lipid metabolism; fatty acid biosynthesis. In terms of biological role, catalyzes the last of the four reactions of the long-chain fatty acids elongation cycle. This endoplasmic reticulum-bound enzymatic process, allows the addition of 2 carbons to the chain of long- and very long-chain fatty acids/VLCFAs per cycle. This enzyme reduces the trans-2,3-enoyl-CoA fatty acid intermediate to an acyl-CoA that can be further elongated by entering a new cycle of elongation. Thereby, it participates in the production of VLCFAs of different chain lengths that are involved in multiple biological processes as precursors of membrane lipids and lipid mediators. The protein is Very-long-chain enoyl-CoA reductase (gpsn2) of Dictyostelium discoideum (Social amoeba).